Reading from the N-terminus, the 134-residue chain is Small ribosomal subunit protein uS9 (134 aa).

A disordered region spans residues 114–134; the sequence is EVERKKYGLKKARRAPQFSKR. A compositionally biased stretch (basic residues) spans 120-134; it reads YGLKKARRAPQFSKR.

This sequence belongs to the universal ribosomal protein uS9 family.

This chain is Small ribosomal subunit protein uS9, found in Thermotoga sp. (strain RQ2).